Consider the following 1609-residue polypeptide: Probable outer membrane protein pmp21 (1609 aa).

Residues 1–30 (MVAKKTVRSYRSSFSHSVIVAILSAGIAFE) form the signal peptide. The segment covering 132–145 (FSQPTQEPDTSNAV) has biased composition (polar residues). Disordered stretches follow at residues 132–183 (FSQP…KSPE) and 640–677 (TAPV…EVPP). Composition is skewed to basic and acidic residues over residues 149 to 175 (ISSD…KEVS) and 651 to 672 (NKDE…KTVE). The Autotransporter domain occupies 1328 to 1609 (ELDFSTNVWG…DFNGGIRIIF (282 aa)).

This sequence belongs to the PMP outer membrane protein family.

It is found in the secreted. The protein localises to the cell wall. Its subcellular location is the cell outer membrane. This chain is Probable outer membrane protein pmp21 (pmp21), found in Chlamydia pneumoniae (Chlamydophila pneumoniae).